An 878-amino-acid chain; its full sequence is Microtubule-associated protein homolog maph-1.1 (878 aa).

Disordered stretches follow at residues 224–425 and 456–518; these read ALSD…AQAT and EIPP…PVVP. Composition is skewed to low complexity over residues 241–268, 278–293, 310–321, and 328–339; these read PSARPATTTGTATRPTRPAVPAASAPRA, SRPTTTRNAAPAPRTA, APTRAPVPARSA, and APAKPAANTAKA. Basic and acidic residues-rich tracts occupy residues 416–425 and 480–496; these read PPRHEVAQAT and EEDKIPEPVDAFKKPDP.

The protein belongs to the MAP1A/MAP1B/MAP1S family. Interacts with dlg-1.

It localises to the cell projection. The protein localises to the dendrite. The protein resides in the perikaryon. It is found in the axon. Its subcellular location is the cytoplasm. It localises to the cytoskeleton. The sequence is that of Microtubule-associated protein homolog maph-1.1 from Caenorhabditis elegans.